The chain runs to 550 residues: 2-succinyl-5-enolpyruvyl-6-hydroxy-3-cyclohexene-1-carboxylate synthase (550 aa).

It belongs to the TPP enzyme family. MenD subfamily. As to quaternary structure, homodimer. The cofactor is Mg(2+). Requires Mn(2+) as cofactor. Thiamine diphosphate serves as cofactor.

It catalyses the reaction isochorismate + 2-oxoglutarate + H(+) = 5-enolpyruvoyl-6-hydroxy-2-succinyl-cyclohex-3-ene-1-carboxylate + CO2. The protein operates within quinol/quinone metabolism; 1,4-dihydroxy-2-naphthoate biosynthesis; 1,4-dihydroxy-2-naphthoate from chorismate: step 2/7. Its pathway is quinol/quinone metabolism; menaquinone biosynthesis. Catalyzes the thiamine diphosphate-dependent decarboxylation of 2-oxoglutarate and the subsequent addition of the resulting succinic semialdehyde-thiamine pyrophosphate anion to isochorismate to yield 2-succinyl-5-enolpyruvyl-6-hydroxy-3-cyclohexene-1-carboxylate (SEPHCHC). This Desulfitobacterium hafniense (strain DSM 10664 / DCB-2) protein is 2-succinyl-5-enolpyruvyl-6-hydroxy-3-cyclohexene-1-carboxylate synthase.